Reading from the N-terminus, the 311-residue chain is 4-hydroxyproline 2-epimerase (311 aa).

The active-site Proton acceptor is the cysteine 88. Residues 89-90 (GH), histidine 208, and aspartate 232 contribute to the substrate site. Catalysis depends on cysteine 236, which acts as the Proton donor. 237-238 (GT) contacts substrate.

Belongs to the proline racemase family.

It catalyses the reaction trans-4-hydroxy-L-proline = cis-4-hydroxy-D-proline. Its function is as follows. Catalyzes the epimerization of trans-4-hydroxy-L-proline (t4LHyp) to cis-4-hydroxy-D-proline (c4DHyp). Is likely involved in a degradation pathway that converts t4LHyp to alpha-ketoglutarate. Displays no proline racemase activity. The protein is 4-hydroxyproline 2-epimerase of Chromohalobacter salexigens (strain ATCC BAA-138 / DSM 3043 / CIP 106854 / NCIMB 13768 / 1H11).